The chain runs to 183 residues: Translation initiation factor IF-3 (183 aa).

It belongs to the IF-3 family. In terms of assembly, monomer.

It is found in the cytoplasm. IF-3 binds to the 30S ribosomal subunit and shifts the equilibrium between 70S ribosomes and their 50S and 30S subunits in favor of the free subunits, thus enhancing the availability of 30S subunits on which protein synthesis initiation begins. This Pseudomonas putida (strain ATCC 700007 / DSM 6899 / JCM 31910 / BCRC 17059 / LMG 24140 / F1) protein is Translation initiation factor IF-3.